A 424-amino-acid polypeptide reads, in one-letter code: Inositol phosphosphingolipids phospholipase C (424 aa).

E49 provides a ligand contact to Mg(2+). The active-site Proton acceptor is H289. The next 2 membrane-spanning stretches (helical) occupy residues 335–357 (LRIA…IAWC) and 364–386 (VIIL…CIGL).

The protein belongs to the neutral sphingomyelinase family. It depends on Mg(2+) as a cofactor.

The protein resides in the cell membrane. It localises to the endoplasmic reticulum membrane. It participates in lipid metabolism; sphingolipid metabolism. Its function is as follows. Inositol phosphosphingolipids phospholipase essential for the coordination of cell wall formation. Responsible for the hydrolysis of the phosphosphingolipids (IPS), inositol phosphorylceramide (IPC), mannosylinositol phosphorylceramide (MIPC), and mannosyldiinositol phosphorylceramide (M(IP)2C). This chain is Inositol phosphosphingolipids phospholipase C (css1), found in Schizosaccharomyces pombe (strain 972 / ATCC 24843) (Fission yeast).